Consider the following 99-residue polypeptide: U11-barytoxin-Tl1a (99 aa).

The N-terminal stretch at 1–21 is a signal peptide; the sequence is MKTLVLVAVLGLASLYLLSYA. A propeptide spanning residues 22–50 is cleaved from the precursor; it reads SEVQQISRDEEDFRALMASFGGIFDTEER. Disulfide bonds link C57–C71, C64–C76, and C70–C90.

The protein belongs to the neurotoxin 10 (Hwtx-1) family. 25 (ICK4) subfamily. Expressed by the venom gland.

Its subcellular location is the secreted. Functionally, ion channel inhibitor. The polypeptide is U11-barytoxin-Tl1a (Trittame loki (Brush-footed trapdoor spider)).